We begin with the raw amino-acid sequence, 209 residues long: MIRFITIPDFADYQVTLKLMEDYVNKVISDHKPEIIYLVEHSEVYTAGTNYKQEELLNYGDIPVIYTGRGGKFTFHGPGQRVIYPILNLASPNRHKDLKLYIKMLEEWIINSLNYFGIKAYIIKDKVGIWVKVRKDEFAKIAAIGVRVRKWVTYHGVAINISTDLSKFSGIIPCGLENSLVTSLNQLGIHVEMSEFDKIIQTEFNKIFK.

In terms of domain architecture, BPL/LPL catalytic spans 30–209 (DHKPEIIYLV…IQTEFNKIFK (180 aa)). Residues 69–76 (RGGKFTFH), 143–145 (AIG), and 156–158 (GVA) each bind substrate. Catalysis depends on C174, which acts as the Acyl-thioester intermediate.

The protein belongs to the LipB family.

The protein localises to the cytoplasm. It catalyses the reaction octanoyl-[ACP] + L-lysyl-[protein] = N(6)-octanoyl-L-lysyl-[protein] + holo-[ACP] + H(+). Its pathway is protein modification; protein lipoylation via endogenous pathway; protein N(6)-(lipoyl)lysine from octanoyl-[acyl-carrier-protein]: step 1/2. Catalyzes the transfer of endogenously produced octanoic acid from octanoyl-acyl-carrier-protein onto the lipoyl domains of lipoate-dependent enzymes. Lipoyl-ACP can also act as a substrate although octanoyl-ACP is likely to be the physiological substrate. This Rickettsia conorii (strain ATCC VR-613 / Malish 7) protein is Octanoyltransferase.